The chain runs to 355 residues: Peptide chain release factor 1 (355 aa).

N5-methylglutamine is present on Q231. The span at 280–291 shows a compositional bias: basic and acidic residues; the sequence is SERLAKESEARK. The segment at 280-303 is disordered; the sequence is SERLAKESEARKSQVGSGDRSERI.

Belongs to the prokaryotic/mitochondrial release factor family. Post-translationally, methylated by PrmC. Methylation increases the termination efficiency of RF1.

Its subcellular location is the cytoplasm. Its function is as follows. Peptide chain release factor 1 directs the termination of translation in response to the peptide chain termination codons UAG and UAA. The sequence is that of Peptide chain release factor 1 from Campylobacter jejuni subsp. jejuni serotype O:2 (strain ATCC 700819 / NCTC 11168).